The chain runs to 524 residues: Cytochrome P450 monooxygenase patH (524 aa).

The Cytoplasmic segment spans residues 1–4 (MEPM). A helical transmembrane segment spans residues 5–23 (LLLILVAAVVLLFVRWAFV). Residues 24-524 (YGHRTSNMPK…KEVFSQFTEG (501 aa)) are Lumenal-facing. A glycan (N-linked (GlcNAc...) asparagine) is linked at Asn191. A heme-binding site is contributed by Cys442. Asn499 carries an N-linked (GlcNAc...) asparagine glycan.

The protein belongs to the cytochrome P450 family. Heme serves as cofactor.

The protein localises to the endoplasmic reticulum membrane. It carries out the reaction 3-methylphenol + reduced [NADPH--hemoprotein reductase] + O2 = 3-hydroxybenzyl alcohol + oxidized [NADPH--hemoprotein reductase] + H2O + H(+). It participates in mycotoxin biosynthesis; patulin biosynthesis. In terms of biological role, cytochrome P450 monooxygenase; part of the gene cluster that mediates the biosynthesis of patulin, an acetate-derived tetraketide mycotoxin produced by several fungal species that shows antimicrobial properties against several bacteria. PatH catalyzes the conversion of m-cresol into m-hydroxybenzyl alcohol. The pathway begins with the synthesis of 6-methylsalicylic acid by the polyketide synthase (PKS) patK via condensation of acetate and malonate units. The 6-methylsalicylic acid decarboxylase patG then catalyzes the decarboxylation of 6-methylsalicylic acid to yield m-cresol (also known as 3-methylphenol). These first reactions occur in the cytosol. The intermediate m-cresol is then transported into the endoplasmic reticulum where the cytochrome P450 monooxygenase patH converts it to m-hydroxybenzyl alcohol, which is further converted to gentisyl alcohol by the cytochrome P450 monooxygenase patI. The oxidoreductases patJ and patO further convert gentisyl alcohol to isoepoxydon in the vacuole. PatN catalyzes then the transformation of isoepoxydon into phyllostine. The cluster protein patF is responsible for the conversion from phyllostine to neopatulin whereas the alcohol dehydrogenase patD converts neopatulin to E-ascladiol. The steps between isoepoxydon and E-ascladiol occur in the cytosol, and E-ascladiol is probably secreted to the extracellular space by one of the cluster-specific transporters patC or patM. Finally, the secreted patulin synthase patE catalyzes the conversion of E-ascladiol to patulin. The sequence is that of Cytochrome P450 monooxygenase patH from Aspergillus clavatus (strain ATCC 1007 / CBS 513.65 / DSM 816 / NCTC 3887 / NRRL 1 / QM 1276 / 107).